The following is a 203-amino-acid chain: A-type ATP synthase subunit E (203 aa).

The protein belongs to the V-ATPase E subunit family. As to quaternary structure, has multiple subunits with at least A(3), B(3), C, D, E, F, H, I and proteolipid K(x).

It localises to the cell membrane. In terms of biological role, component of the A-type ATP synthase that produces ATP from ADP in the presence of a proton gradient across the membrane. This chain is A-type ATP synthase subunit E, found in Thermococcus sibiricus (strain DSM 12597 / MM 739).